We begin with the raw amino-acid sequence, 157 residues long: Regulatory protein RecX (157 aa).

Belongs to the RecX family.

The protein resides in the cytoplasm. In terms of biological role, modulates RecA activity. The polypeptide is Regulatory protein RecX (Leptothrix cholodnii (strain ATCC 51168 / LMG 8142 / SP-6) (Leptothrix discophora (strain SP-6))).